We begin with the raw amino-acid sequence, 468 residues long: MSSGKIAQVVGPVVDVMFASGDKLPEINNALIVYKDSDKKQKIVLEVALELGDGMVRTIAMESTDGLTRGLEVLDTGRAISVPVGKETLGRVFNVLGETIDLEEPFAEDVDRQPIHKKAPSFDELSTSSEILETGIKVIDLLAPYLKGGKVGLFGGAGVGKTVLIQELIHNIAQEHGGISVFTGVGERTREGNDLYWEMKESGVIEKTAMVFGQMNEPPGARMRVALTGLTIAEYFRDVEGQDVLLFIDNIFRFTQAGSEVSALLGRMPSAVGYQPTLATEMGQLQERITSTQKGSVTSIQAIYVPADDYTDPAPATAFAHLDSTTNLERKLTQMGIYPAVDPLASSSRALSPEIVGEEHYAVATEVQRVLQRYRELQDIIAILGMDELSDEEKTLVGRARRIQFFLSQNFNVAEQFTGLPGSYVPVADTVRGFKEILEGKYDELPEDAFRSVGPIEDVIKKAEKMGF.

ATP is bound at residue 155 to 162 (GGAGVGKT).

The protein belongs to the ATPase alpha/beta chains family. F-type ATPases have 2 components, CF(1) - the catalytic core - and CF(0) - the membrane proton channel. CF(1) has five subunits: alpha(3), beta(3), gamma(1), delta(1), epsilon(1). CF(0) has three main subunits: a(1), b(2) and c(9-12). The alpha and beta chains form an alternating ring which encloses part of the gamma chain. CF(1) is attached to CF(0) by a central stalk formed by the gamma and epsilon chains, while a peripheral stalk is formed by the delta and b chains.

It localises to the cell membrane. It catalyses the reaction ATP + H2O + 4 H(+)(in) = ADP + phosphate + 5 H(+)(out). Produces ATP from ADP in the presence of a proton gradient across the membrane. The catalytic sites are hosted primarily by the beta subunits. This chain is ATP synthase subunit beta, found in Streptococcus pyogenes serotype M1.